A 229-amino-acid chain; its full sequence is MGQKVHPNGIRLGITKPWISTWYADKSDYANNLNSDWEVRQYLTEKLKAASVSKIVIERPAKSIRVTIHTARPGIVIGKKGEDVEVLRAYVSKITGTTAQINIAEIRKPELDAKLVADSIAQQLERRVMFRRAMKRAVQNAMRIGAQGIKVQVSGRLGGAEIARAEWYREGRVPLHTLRADIDYSTAESHTQYGVIGIKVWIFKGEVLDGLVPAIEEPKQQPKRKPRGK.

A KH type-2 domain is found at 39–107 (VRQYLTEKLK…TAQINIAEIR (69 aa)).

The protein belongs to the universal ribosomal protein uS3 family. As to quaternary structure, part of the 30S ribosomal subunit. Forms a tight complex with proteins S10 and S14.

Functionally, binds the lower part of the 30S subunit head. Binds mRNA in the 70S ribosome, positioning it for translation. The sequence is that of Small ribosomal subunit protein uS3 from Shewanella frigidimarina (strain NCIMB 400).